We begin with the raw amino-acid sequence, 500 residues long: Histidinol dehydrogenase homolog 1 (500 aa).

Residues 1 to 25 (MPPAGGIFHRPPTTRKSRRLTPRSA) are disordered. The span at 12 to 21 (PTTRKSRRLT) shows a compositional bias: basic residues. Zn(2+)-binding residues include Q313 and H316. Active-site proton acceptor residues include E381 and H382. D415 and H475 together coordinate Zn(2+).

It belongs to the histidinol dehydrogenase family. Requires Zn(2+) as cofactor.

The polypeptide is Histidinol dehydrogenase homolog 1 (Mesorhizobium japonicum (strain LMG 29417 / CECT 9101 / MAFF 303099) (Mesorhizobium loti (strain MAFF 303099))).